A 454-amino-acid chain; its full sequence is tRNA modification GTPase MnmE (454 aa).

The (6S)-5-formyl-5,6,7,8-tetrahydrofolate site is built by Arg-23, Glu-80, and Lys-120. In terms of domain architecture, TrmE-type G spans 216-377 (GMKVVIAGRP…LRNHLKQSMG (162 aa)). Asn-226 provides a ligand contact to K(+). GTP contacts are provided by residues 226–231 (NAGKSS), 245–251 (TDIAGTT), 270–273 (DTAG), 335–338 (NKAD), and 358–360 (SAR). Ser-230 contributes to the Mg(2+) binding site. Thr-245, Ile-247, and Thr-250 together coordinate K(+). Thr-251 is a Mg(2+) binding site. Position 454 (Lys-454) interacts with (6S)-5-formyl-5,6,7,8-tetrahydrofolate.

This sequence belongs to the TRAFAC class TrmE-Era-EngA-EngB-Septin-like GTPase superfamily. TrmE GTPase family. In terms of assembly, homodimer. Heterotetramer of two MnmE and two MnmG subunits. K(+) is required as a cofactor.

It is found in the cytoplasm. Exhibits a very high intrinsic GTPase hydrolysis rate. Involved in the addition of a carboxymethylaminomethyl (cmnm) group at the wobble position (U34) of certain tRNAs, forming tRNA-cmnm(5)s(2)U34. The sequence is that of tRNA modification GTPase MnmE from Salmonella arizonae (strain ATCC BAA-731 / CDC346-86 / RSK2980).